Consider the following 183-residue polypeptide: Large ribosomal subunit protein uL5 (183 aa).

Belongs to the universal ribosomal protein uL5 family. As to quaternary structure, part of the 50S ribosomal subunit; contacts the 5S rRNA and probably tRNA. Forms a bridge to the 30S subunit in the 70S ribosome.

This is one of the proteins that bind and probably mediate the attachment of the 5S RNA into the large ribosomal subunit, where it forms part of the central protuberance. In the 70S ribosome it contacts protein S13 of the 30S subunit (bridge B1b), connecting the 2 subunits; this bridge is implicated in subunit movement. May contact the P site tRNA; the 5S rRNA and some of its associated proteins might help stabilize positioning of ribosome-bound tRNAs. This Thermococcus kodakarensis (strain ATCC BAA-918 / JCM 12380 / KOD1) (Pyrococcus kodakaraensis (strain KOD1)) protein is Large ribosomal subunit protein uL5.